The sequence spans 368 residues: Queuine tRNA-ribosyltransferase (368 aa).

Catalysis depends on Asp-89, which acts as the Proton acceptor. Substrate-binding positions include Asp-89–Phe-93, Asp-143, Gln-187, and Gly-214. The active-site Nucleophile is Asp-264. Residues Thr-269 to Arg-273 are RNA binding; important for wobble base 34 recognition. Zn(2+)-binding residues include Cys-302, Cys-304, Cys-307, and His-333.

Belongs to the queuine tRNA-ribosyltransferase family. As to quaternary structure, homodimer. Within each dimer, one monomer is responsible for RNA recognition and catalysis, while the other monomer binds to the replacement base PreQ1. It depends on Zn(2+) as a cofactor.

It catalyses the reaction 7-aminomethyl-7-carbaguanine + guanosine(34) in tRNA = 7-aminomethyl-7-carbaguanosine(34) in tRNA + guanine. The protein operates within tRNA modification; tRNA-queuosine biosynthesis. Its function is as follows. Catalyzes the base-exchange of a guanine (G) residue with the queuine precursor 7-aminomethyl-7-deazaguanine (PreQ1) at position 34 (anticodon wobble position) in tRNAs with GU(N) anticodons (tRNA-Asp, -Asn, -His and -Tyr). Catalysis occurs through a double-displacement mechanism. The nucleophile active site attacks the C1' of nucleotide 34 to detach the guanine base from the RNA, forming a covalent enzyme-RNA intermediate. The proton acceptor active site deprotonates the incoming PreQ1, allowing a nucleophilic attack on the C1' of the ribose to form the product. After dissociation, two additional enzymatic reactions on the tRNA convert PreQ1 to queuine (Q), resulting in the hypermodified nucleoside queuosine (7-(((4,5-cis-dihydroxy-2-cyclopenten-1-yl)amino)methyl)-7-deazaguanosine). In Blochmanniella pennsylvanica (strain BPEN), this protein is Queuine tRNA-ribosyltransferase.